A 208-amino-acid polypeptide reads, in one-letter code: LexA repressor (208 aa).

A DNA-binding region (H-T-H motif) is located at residues 30 to 50; it reads VREICAAVGLSSTSTVHGHLS. Catalysis depends on for autocatalytic cleavage activity residues Ser129 and Lys167.

It belongs to the peptidase S24 family. As to quaternary structure, homodimer.

It carries out the reaction Hydrolysis of Ala-|-Gly bond in repressor LexA.. In terms of biological role, represses a number of genes involved in the response to DNA damage (SOS response), including recA and lexA. In the presence of single-stranded DNA, RecA interacts with LexA causing an autocatalytic cleavage which disrupts the DNA-binding part of LexA, leading to derepression of the SOS regulon and eventually DNA repair. The chain is LexA repressor from Lactobacillus acidophilus (strain ATCC 700396 / NCK56 / N2 / NCFM).